Consider the following 417-residue polypeptide: Gamma-glutamyl phosphate reductase (417 aa).

The protein belongs to the gamma-glutamyl phosphate reductase family.

The protein localises to the cytoplasm. It carries out the reaction L-glutamate 5-semialdehyde + phosphate + NADP(+) = L-glutamyl 5-phosphate + NADPH + H(+). The protein operates within amino-acid biosynthesis; L-proline biosynthesis; L-glutamate 5-semialdehyde from L-glutamate: step 2/2. Catalyzes the NADPH-dependent reduction of L-glutamate 5-phosphate into L-glutamate 5-semialdehyde and phosphate. The product spontaneously undergoes cyclization to form 1-pyrroline-5-carboxylate. This chain is Gamma-glutamyl phosphate reductase, found in Klebsiella pneumoniae (strain 342).